The sequence spans 480 residues: Probable tRNA N6-adenosine threonylcarbamoyltransferase, mitochondrial (480 aa).

The N-terminal 86 residues, 1-86 (MVRLFLTLSP…NPNFDDNLVV (86 aa)), are a transit peptide targeting the mitochondrion. A divalent metal cation-binding residues include histidine 194 and histidine 198. Residues 217–221 (LISGG), aspartate 250, glycine 265, glutamate 269, 373–374 (SN), and threonine 401 contribute to the substrate site. Aspartate 402 is an a divalent metal cation binding site.

Belongs to the KAE1 / TsaD family. As to quaternary structure, homodimer. A divalent metal cation serves as cofactor. Expressed in young developing leaves, roots, flowers and siliques.

The protein localises to the mitochondrion inner membrane. It catalyses the reaction L-threonylcarbamoyladenylate + adenosine(37) in tRNA = N(6)-L-threonylcarbamoyladenosine(37) in tRNA + AMP + H(+). Functionally, required for the formation of a threonylcarbamoyl group on adenosine at position 37 (t(6)A37) in mitochondrial tRNAs that read codons beginning with adenine. Probably involved in the transfer of the threonylcarbamoyl moiety of threonylcarbamoyl-AMP (TC-AMP) to the N6 group of A37. Involved in mitochondrial genome maintenance. May have a role in embryonic development in plants. In Arabidopsis thaliana (Mouse-ear cress), this protein is Probable tRNA N6-adenosine threonylcarbamoyltransferase, mitochondrial.